The following is a 141-amino-acid chain: MRHGNSGRKLNRTASHRKAMFANMAASLITHEQIVTTLPKAKEIRPIVERLVTLGKRGDLHARRQAISQIKDQDAVRKLFDAIASRYATRNGGYLRIMKAGYRQGDNAALAVVEFVERDVDAKGAADKARVAAEAAAAEAA.

It belongs to the bacterial ribosomal protein bL17 family. Part of the 50S ribosomal subunit. Contacts protein L32.

The protein is Large ribosomal subunit protein bL17 of Agrobacterium fabrum (strain C58 / ATCC 33970) (Agrobacterium tumefaciens (strain C58)).